Reading from the N-terminus, the 244-residue chain is ATP synthase subunit 4, mitochondrial (244 aa).

Residues 1–36 (MASRLAKSAICAARVRPVLSSRTIPAAATTLTSTRS) constitute a mitochondrion transit peptide.

This sequence belongs to the eukaryotic ATPase B chain family. In terms of assembly, F-type ATPases have 2 components, CF(1) - the catalytic core - and CF(0) - the membrane proton channel. In yeast, the dimeric form of ATP synthase consists of 17 polypeptides: alpha, beta, gamma, delta, epsilon, 4 (B), 5 (OSCP), 6 (A), 8, 9 (C), d, E (Tim11), f, g, h, i/j and k.

Its subcellular location is the mitochondrion. It localises to the mitochondrion inner membrane. In terms of biological role, mitochondrial membrane ATP synthase (F(1)F(0) ATP synthase or Complex V) produces ATP from ADP in the presence of a proton gradient across the membrane which is generated by electron transport complexes of the respiratory chain. F-type ATPases consist of two structural domains, F(1) - containing the extramembraneous catalytic core, and F(0) - containing the membrane proton channel, linked together by a central stalk and a peripheral stalk. During catalysis, ATP synthesis in the catalytic domain of F(1) is coupled via a rotary mechanism of the central stalk subunits to proton translocation. Part of the complex F(0) domain and the peripheric stalk, which acts as a stator to hold the catalytic alpha(3)beta(3) subcomplex and subunit a/ATP6 static relative to the rotary elements. In Paracoccidioides brasiliensis, this protein is ATP synthase subunit 4, mitochondrial (ATP4).